Reading from the N-terminus, the 318-residue chain is NADH-ubiquinone oxidoreductase chain 1 (318 aa).

Transmembrane regions (helical) follow at residues 2–22, 69–89, 100–120, 146–166, 171–191, 222–242, 253–273, and 294–314; these read PVIN…FLML, ILYI…WTPL, LGLL…LWSG, LALI…STLI, HSWL…STLA, LFFM…AMIF, ELHT…FLWI, and LPLT…TSGI.

The protein belongs to the complex I subunit 1 family. In terms of assembly, core subunit of respiratory chain NADH dehydrogenase (Complex I) which is composed of 45 different subunits.

Its subcellular location is the mitochondrion inner membrane. It catalyses the reaction a ubiquinone + NADH + 5 H(+)(in) = a ubiquinol + NAD(+) + 4 H(+)(out). In terms of biological role, core subunit of the mitochondrial membrane respiratory chain NADH dehydrogenase (Complex I) which catalyzes electron transfer from NADH through the respiratory chain, using ubiquinone as an electron acceptor. Essential for the catalytic activity and assembly of complex I. The polypeptide is NADH-ubiquinone oxidoreductase chain 1 (MT-ND1) (Pongo pygmaeus (Bornean orangutan)).